Here is a 556-residue protein sequence, read N- to C-terminus: Cell wall integrity and stress response component 3 (556 aa).

A signal peptide spans 1 to 38 (MERVWFAKLTNKGTIKIGYISFILLSLLCQSLIGLVNA). A WSC domain is found at 39–132 (DFNYEGCYSA…SSYMNVYVNA (94 aa)). The Extracellular portion of the chain corresponds to 39 to 384 (DFNYEGCYSA…QRLSGGAIAG (346 aa)). N-linked (GlcNAc...) asparagine glycosylation occurs at asparagine 84. Composition is skewed to low complexity over residues 142 to 169 (SSSKEGSSTSYMPSTTSSLSSAQISSTT) and 184 to 257 (TTVS…STTS). 2 disordered regions span residues 142–257 (SSSK…STTS) and 269–312 (TLSS…PSTS). Asparagine 367 and asparagine 370 each carry an N-linked (GlcNAc...) asparagine glycan. The helical transmembrane segment at 385-405 (IVIGVVFGVIFIILILLFLIW) threads the bilayer. Residues 406–556 (RRRKSHDQLD…LSSTVSHNRA (151 aa)) are Cytoplasmic-facing. 2 disordered regions span residues 425 to 444 (YSFGDEDANPIGPPPSSGTT) and 534 to 556 (LQVVNPDNPDNPELSSTVSHNRA). Residues 546–556 (ELSSTVSHNRA) show a composition bias toward polar residues.

It is found in the membrane. The sequence is that of Cell wall integrity and stress response component 3 (WSC3) from Saccharomyces cerevisiae (strain ATCC 204508 / S288c) (Baker's yeast).